The sequence spans 405 residues: Mucosal addressin cell adhesion molecule 1 (405 aa).

Residues 1–21 (MESILALLLALALVPYQLSRG) form the signal peptide. Ig-like domains lie at 22–109 (QSFQ…ILVY) and 110–227 (AFPD…TSPK). Over 22 to 364 (QSFQVNPPES…PGQVTPNSSS (343 aa)) the chain is Extracellular. 3 cysteine pairs are disulfide-bonded: Cys45–Cys91, Cys49–Cys95, and Cys132–Cys200. Positions 221-257 (QSQTSPKPPNTTSAEPYILTSSSTAEAVSTGLNITTL) are mucin-like. 2 N-linked (GlcNAc...) asparagine glycosylation sites follow: Asn230 and Asn253. Positions 255–275 (TTLPSAPPYPKLSPRTLSSEG) are disordered. One can recognise an Ig-like 3 domain in the interval 258–357 (PSAPPYPKLS…EVTNLYVPGQ (100 aa)). A disulfide bridge connects residues Cys293 and Cys341. Asn361 is a glycosylation site (N-linked (GlcNAc...) asparagine). A helical membrane pass occupies residues 365-385 (TVVLWIGSLVLGLLALVFLAY). The Cytoplasmic segment spans residues 386–405 (RLWKCYRPGPRPDTSSCTHL).

Homodimer. O-glycosylated; contains syalic acid. The Ser/Thr-rich mucin-like domain may provide possible sites for O-glycosylation. As to expression, highly expressed on high endothelial venules (HEV) of organized intestinal lymphoid tissues like the Peyer patches and mesenteric lymph nodes, and in the lamina propria of the intestine. Some expression found in the spleen, and low levels of expression in the peripheral lymph nodes and the lactating mammary gland. No expression was detected in the liver, kidneys, lungs or in normal brain. Expressed as well in brain endothelioma cells, and mucosal tissues which are in a chronic state of inflammation, such as inflamed pancreas.

The protein localises to the membrane. In terms of biological role, cell adhesion leukocyte receptor expressed by mucosal venules, helps to direct lymphocyte traffic into mucosal tissues including the Peyer patches and the intestinal lamina propria. It can bind both the integrin alpha-4/beta-7 and L-selectin, regulating both the passage and retention of leukocytes. Both isoform 1 and isoform 2 can adhere to integrin alpha-4/beta-7. Isoform 2, lacking the mucin-like domain, may be specialized in supporting integrin alpha-4/beta-7-dependent adhesion strengthening, independent of L-selectin binding. This chain is Mucosal addressin cell adhesion molecule 1 (Madcam1), found in Mus musculus (Mouse).